A 344-amino-acid polypeptide reads, in one-letter code: Protein RecA (344 aa).

65–72 (GPESSGKT) is an ATP binding site.

The protein belongs to the RecA family.

The protein resides in the cytoplasm. Its function is as follows. Can catalyze the hydrolysis of ATP in the presence of single-stranded DNA, the ATP-dependent uptake of single-stranded DNA by duplex DNA, and the ATP-dependent hybridization of homologous single-stranded DNAs. It interacts with LexA causing its activation and leading to its autocatalytic cleavage. This Rubrobacter xylanophilus (strain DSM 9941 / JCM 11954 / NBRC 16129 / PRD-1) protein is Protein RecA.